We begin with the raw amino-acid sequence, 143 residues long: SsrA-binding protein (143 aa).

The protein belongs to the SmpB family.

The protein resides in the cytoplasm. Required for rescue of stalled ribosomes mediated by trans-translation. Binds to transfer-messenger RNA (tmRNA), required for stable association of tmRNA with ribosomes. tmRNA and SmpB together mimic tRNA shape, replacing the anticodon stem-loop with SmpB. tmRNA is encoded by the ssrA gene; the 2 termini fold to resemble tRNA(Ala) and it encodes a 'tag peptide', a short internal open reading frame. During trans-translation Ala-aminoacylated tmRNA acts like a tRNA, entering the A-site of stalled ribosomes, displacing the stalled mRNA. The ribosome then switches to translate the ORF on the tmRNA; the nascent peptide is terminated with the 'tag peptide' encoded by the tmRNA and targeted for degradation. The ribosome is freed to recommence translation, which seems to be the essential function of trans-translation. This chain is SsrA-binding protein, found in Mycoplasmoides gallisepticum (strain R(low / passage 15 / clone 2)) (Mycoplasma gallisepticum).